We begin with the raw amino-acid sequence, 189 residues long: uncharacterized protein (189 aa).

The first 23 residues, 1–23 (MIKTTPHKIVILMGILLSPSVFA), serve as a signal peptide directing secretion. The disordered stretch occupies residues 104–125 (SSPKLIIPQSGDSSSTTSNIGM). Over residues 113 to 123 (SGDSSSTTSNI) the composition is skewed to polar residues.

This sequence belongs to the fimbrial protein family.

The protein resides in the fimbrium. In terms of biological role, part of the yadCKLM-htrE-yadVN fimbrial operon. Could contribute to adhesion to various surfaces in specific environmental niches. This is an uncharacterized protein from Escherichia coli (strain K12).